Consider the following 130-residue polypeptide: Iron-sulfur cluster insertion protein ErpA (130 aa).

Iron-sulfur cluster is bound by residues C58, C122, and C124.

This sequence belongs to the HesB/IscA family. As to quaternary structure, homodimer. It depends on iron-sulfur cluster as a cofactor.

Its function is as follows. Required for insertion of 4Fe-4S clusters for at least IspG. The polypeptide is Iron-sulfur cluster insertion protein ErpA (Stenotrophomonas maltophilia (strain K279a)).